A 316-amino-acid chain; its full sequence is Pantothenate kinase (316 aa).

ATP is bound at residue 95 to 102; the sequence is GSVAVGKS.

Belongs to the prokaryotic pantothenate kinase family.

The protein localises to the cytoplasm. The catalysed reaction is (R)-pantothenate + ATP = (R)-4'-phosphopantothenate + ADP + H(+). It participates in cofactor biosynthesis; coenzyme A biosynthesis; CoA from (R)-pantothenate: step 1/5. The polypeptide is Pantothenate kinase (Shewanella pealeana (strain ATCC 700345 / ANG-SQ1)).